A 133-amino-acid chain; its full sequence is Peptidyl-prolyl cis-trans isomerase PIN4 (133 aa).

The segment covering 1–29 (MGKNDKKGADKGGKAKGGDKGKDAKDTKD) has biased composition (basic and acidic residues). Residues 1–42 (MGKNDKKGADKGGKAKGGDKGKDAKDTKDSGSGGKAKGAQSI) are disordered. The PpiC domain occupies 39–131 (AQSINVRHIL…FGYHIIMVEG (93 aa)).

Belongs to the PpiC/parvulin rotamase family. PIN4 subfamily.

It catalyses the reaction [protein]-peptidylproline (omega=180) = [protein]-peptidylproline (omega=0). In terms of biological role, PPIases accelerate the folding of proteins. It catalyzes the cis-trans isomerization of proline imidic peptide bonds in oligopeptides. This Gibberella zeae (strain ATCC MYA-4620 / CBS 123657 / FGSC 9075 / NRRL 31084 / PH-1) (Wheat head blight fungus) protein is Peptidyl-prolyl cis-trans isomerase PIN4 (PIN4).